Consider the following 439-residue polypeptide: Xaa-Pro dipeptidase (439 aa).

Residues Asp244, Asp255, His335, Glu380, and Glu419 each coordinate Mn(2+).

This sequence belongs to the peptidase M24B family. Bacterial-type prolidase subfamily. The cofactor is Mn(2+).

It catalyses the reaction Xaa-L-Pro dipeptide + H2O = an L-alpha-amino acid + L-proline. In terms of biological role, splits dipeptides with a prolyl residue in the C-terminal position. This chain is Xaa-Pro dipeptidase, found in Shewanella sp. (strain MR-4).